Here is a 353-residue protein sequence, read N- to C-terminus: Sesquiterpene synthase Agr8 (353 aa).

The Mg(2+) site is built by D82, N220, S224, and E228. The short motif at 82–86 is the DDXXD motif element; sequence DEYTD. Residues R309 and Y310 each contribute to the (2E,6E)-farnesyl diphosphate site.

Belongs to the terpene synthase family. Mg(2+) is required as a cofactor.

The enzyme catalyses (2E,6E)-farnesyl diphosphate = gamma-muurolene + diphosphate. The catalysed reaction is (2E,6E)-farnesyl diphosphate = alpha-selinene + diphosphate. It catalyses the reaction (2E,6E)-farnesyl diphosphate = delta-cadinene + diphosphate. Functionally, terpene cyclase that catalyzes the cyclization of farnesyl diphosphate (FPP) to various sesquiterpenes, including beta-elemene, gamma-muurolene, alpha-selinene, beta-selinene, beta-cadinene, delta-cadinene and alpha-cadinol. This chain is Sesquiterpene synthase Agr8, found in Cyclocybe aegerita (Black poplar mushroom).